The chain runs to 95 residues: Protein TusB (95 aa).

It belongs to the DsrH/TusB family. As to quaternary structure, heterohexamer, formed by a dimer of trimers. The hexameric TusBCD complex contains 2 copies each of TusB, TusC and TusD. The TusBCD complex interacts with TusE.

It is found in the cytoplasm. Part of a sulfur-relay system required for 2-thiolation of 5-methylaminomethyl-2-thiouridine (mnm(5)s(2)U) at tRNA wobble positions. This is Protein TusB from Escherichia coli (strain K12 / MC4100 / BW2952).